Reading from the N-terminus, the 246-residue chain is uncharacterized protein (246 aa).

6 helical membrane passes run 7 to 27 (KVTL…ALII), 50 to 70 (LNIL…SMEF), 99 to 119 (VSFY…LLFF), 135 to 155 (LALI…GLLC), 163 to 183 (AVAV…VQLM), and 219 to 239 (FSIG…WWCF).

It localises to the cell membrane. This is an uncharacterized protein from Bacillus subtilis (strain 168).